The following is a 354-amino-acid chain: Phosphate acyltransferase (354 aa).

The protein belongs to the PlsX family. Homodimer. Probably interacts with PlsY.

It is found in the cytoplasm. It catalyses the reaction a fatty acyl-[ACP] + phosphate = an acyl phosphate + holo-[ACP]. It participates in lipid metabolism; phospholipid metabolism. Catalyzes the reversible formation of acyl-phosphate (acyl-PO(4)) from acyl-[acyl-carrier-protein] (acyl-ACP). This enzyme utilizes acyl-ACP as fatty acyl donor, but not acyl-CoA. The sequence is that of Phosphate acyltransferase from Nitrobacter hamburgensis (strain DSM 10229 / NCIMB 13809 / X14).